The following is a 363-amino-acid chain: 43 kDa protein (363 aa).

The sequence is that of 43 kDa protein (P43) from Lepidoptera (butterflies and moths).